The following is a 260-amino-acid chain: NAD-capped RNA hydrolase NudC (260 aa).

Substrate is bound by residues Lys25 and Arg69. Zn(2+) contacts are provided by Cys98 and Cys101. Glu111 serves as a coordination point for substrate. Zn(2+)-binding residues include Cys116 and Cys119. Tyr124 serves as a coordination point for substrate. Positions 125 to 248 constitute a Nudix hydrolase domain; it reads PQIAPCVIVA…TVARRLIEDT (124 aa). Residues Ala158, Glu174, and Glu178 each coordinate a divalent metal cation. A Nudix box motif is present at residues 159–180; it reads GFVEVGETLEQAVSREVLEESN. Position 192–199 (192–199) interacts with substrate; that stretch reads QPWPFPHS. Glu219 is an a divalent metal cation binding site. Ala241 lines the substrate pocket.

It belongs to the Nudix hydrolase family. NudC subfamily. In terms of assembly, homodimer. Mg(2+) serves as cofactor. Mn(2+) is required as a cofactor. Requires Zn(2+) as cofactor.

It catalyses the reaction a 5'-end NAD(+)-phospho-ribonucleoside in mRNA + H2O = a 5'-end phospho-adenosine-phospho-ribonucleoside in mRNA + beta-nicotinamide D-ribonucleotide + 2 H(+). It carries out the reaction NAD(+) + H2O = beta-nicotinamide D-ribonucleotide + AMP + 2 H(+). The enzyme catalyses NADH + H2O = reduced beta-nicotinamide D-ribonucleotide + AMP + 2 H(+). Functionally, mRNA decapping enzyme that specifically removes the nicotinamide adenine dinucleotide (NAD) cap from a subset of mRNAs by hydrolyzing the diphosphate linkage to produce nicotinamide mononucleotide (NMN) and 5' monophosphate mRNA. The NAD-cap is present at the 5'-end of some mRNAs and stabilizes RNA against 5'-processing. Has preference for mRNAs with a 5'-end purine. Catalyzes the hydrolysis of a broad range of dinucleotide pyrophosphates. The sequence is that of NAD-capped RNA hydrolase NudC from Yersinia pestis bv. Antiqua (strain Antiqua).